The sequence spans 48 residues: uncharacterized protein (48 aa).

The protein resides in the mitochondrion. This is an uncharacterized protein from Emericella nidulans (Aspergillus nidulans).